The primary structure comprises 82 residues: RNA-binding protein Hfq (82 aa).

Residues 10-70 (DLFLNTVRKS…ISTIMPSQPV (61 aa)) enclose the Sm domain.

Belongs to the Hfq family. As to quaternary structure, homohexamer.

In terms of biological role, RNA chaperone that binds small regulatory RNA (sRNAs) and mRNAs to facilitate mRNA translational regulation in response to envelope stress, environmental stress and changes in metabolite concentrations. Also binds with high specificity to tRNAs. The chain is RNA-binding protein Hfq from Chelativorans sp. (strain BNC1).